Consider the following 492-residue polypeptide: Putative methyl-accepting chemotaxis AlkN (492 aa).

The next 2 membrane-spanning stretches (helical) occupy residues 9–29 (FFLI…GMRL) and 159–179 (YVYF…FLLM). In terms of domain architecture, HAMP spans 180–231 (KKTRSSIDEIVHVMNDMSRGDLTYRTIPSNDEVGKMQSSIIAMGAGVSALIE). The Methyl-accepting transducer domain occupies 236 to 472 (IQGDLFNSAG…DMLDNANIIR (237 aa)).

This sequence belongs to the methyl-accepting chemotaxis (MCP) protein family.

It is found in the membrane. It functions in the pathway hydrocarbon metabolism; alkane degradation. In terms of biological role, chemotactic-signal transducers respond to changes in the concentration of attractants and repellents in the environment, transduce a signal from the outside to the inside of the cell, and facilitate sensory adaptation through the variation of the level of methylation. In Ectopseudomonas oleovorans (Pseudomonas oleovorans), this protein is Putative methyl-accepting chemotaxis AlkN (alkN).